We begin with the raw amino-acid sequence, 232 residues long: Protein FAM246A (232 aa).

3 disordered regions span residues 1–47 (MATP…RAPG), 153–178 (LPPP…RGPT), and 191–232 (AASR…GGGD). Basic and acidic residues predominate over residues 19-31 (EVLRRVTGRRRDP). Residues 211–220 (APVRKNHKKM) are compositionally biased toward basic residues.

Belongs to the FAM246 family.

The polypeptide is Protein FAM246A (Homo sapiens (Human)).